The sequence spans 195 residues: Imidazoleglycerol-phosphate dehydratase (195 aa).

Belongs to the imidazoleglycerol-phosphate dehydratase family.

The protein resides in the cytoplasm. It carries out the reaction D-erythro-1-(imidazol-4-yl)glycerol 3-phosphate = 3-(imidazol-4-yl)-2-oxopropyl phosphate + H2O. It participates in amino-acid biosynthesis; L-histidine biosynthesis; L-histidine from 5-phospho-alpha-D-ribose 1-diphosphate: step 6/9. The polypeptide is Imidazoleglycerol-phosphate dehydratase (Bordetella bronchiseptica (strain ATCC BAA-588 / NCTC 13252 / RB50) (Alcaligenes bronchisepticus)).